A 118-amino-acid polypeptide reads, in one-letter code: Ribonuclease P protein component (118 aa).

Belongs to the RnpA family. In terms of assembly, consists of a catalytic RNA component (M1 or rnpB) and a protein subunit.

The catalysed reaction is Endonucleolytic cleavage of RNA, removing 5'-extranucleotides from tRNA precursor.. In terms of biological role, RNaseP catalyzes the removal of the 5'-leader sequence from pre-tRNA to produce the mature 5'-terminus. It can also cleave other RNA substrates such as 4.5S RNA. The protein component plays an auxiliary but essential role in vivo by binding to the 5'-leader sequence and broadening the substrate specificity of the ribozyme. The protein is Ribonuclease P protein component of Shewanella oneidensis (strain ATCC 700550 / JCM 31522 / CIP 106686 / LMG 19005 / NCIMB 14063 / MR-1).